The sequence spans 378 residues: Alcohol dehydrogenase class-3 (378 aa).

A1 is modified (N-acetylalanine). C46 is a Zn(2+) binding site. H47 lines the NAD(+) pocket. Residues T48 and H68 each coordinate an alcohol. The Zn(2+) site is built by H68, E69, C98, C101, C104, C112, and C176. NAD(+)-binding positions include 201 to 206 (GLGTVG), D225, K230, 294 to 296 (VGV), 319 to 321 (TAF), and R371.

This sequence belongs to the zinc-containing alcohol dehydrogenase family. Class-III subfamily. In terms of assembly, homodimer. Zn(2+) serves as cofactor.

The protein resides in the cytoplasm. It carries out the reaction a primary alcohol + NAD(+) = an aldehyde + NADH + H(+). The enzyme catalyses a secondary alcohol + NAD(+) = a ketone + NADH + H(+). It catalyses the reaction S-(hydroxymethyl)glutathione + NADP(+) = S-formylglutathione + NADPH + H(+). The catalysed reaction is S-(hydroxymethyl)glutathione + NAD(+) = S-formylglutathione + NADH + H(+). Class-III ADH is remarkably ineffective in oxidizing ethanol, but it readily catalyzes the oxidation of long-chain primary alcohols and the oxidation of S-(hydroxymethyl) glutathione. This is Alcohol dehydrogenase class-3 from Pisum sativum (Garden pea).